The primary structure comprises 147 residues: Hemoglobin subunit epsilon (147 aa).

Positions 3–147 constitute a Globin domain; the sequence is HFTAEEKSVI…VATALAHKYH (145 aa). Serine 51 is modified (phosphoserine). Residues histidine 64 and histidine 93 each contribute to the heme b site.

The protein belongs to the globin family. Red blood cells.

Hemoglobin epsilon chain is a beta-type chain found in early embryos. This is Hemoglobin subunit epsilon (HBE1) from Sus scrofa (Pig).